Consider the following 315-residue polypeptide: Protoheme IX farnesyltransferase (315 aa).

9 helical membrane-spanning segments follow: residues 32-52 (VMSL…GHMN), 53-73 (PVLA…SGAL), 93-113 (IPAG…LSAF), 120-140 (LMVN…YAVI), 153-173 (IVIG…AATG), 180-200 (LVLF…LSLF), 226-246 (ALFY…MGFA), 249-269 (FYGV…WRLW), and 295-315 (IFAV…FGVF).

It belongs to the UbiA prenyltransferase family. Protoheme IX farnesyltransferase subfamily.

It localises to the cell inner membrane. It catalyses the reaction heme b + (2E,6E)-farnesyl diphosphate + H2O = Fe(II)-heme o + diphosphate. It functions in the pathway porphyrin-containing compound metabolism; heme O biosynthesis; heme O from protoheme: step 1/1. Its function is as follows. Converts heme B (protoheme IX) to heme O by substitution of the vinyl group on carbon 2 of heme B porphyrin ring with a hydroxyethyl farnesyl side group. In Brucella suis (strain ATCC 23445 / NCTC 10510), this protein is Protoheme IX farnesyltransferase.